The primary structure comprises 415 residues: L-cysteine:1D-myo-inositol 2-amino-2-deoxy-alpha-D-glucopyranoside ligase (415 aa).

Cysteine 43 contacts Zn(2+). L-cysteinyl-5'-AMP is bound by residues cysteine 43–threonine 46, threonine 58, and asparagine 81–threonine 83. Residues isoleucine 45–histidine 55 carry the 'HIGH' region motif. The 'ERGGDP' region signature appears at glutamate 188–proline 193. Tryptophan 229 serves as a coordination point for L-cysteinyl-5'-AMP. Residue cysteine 233 coordinates Zn(2+). Position 251–253 (glycine 251–aspartate 253) interacts with L-cysteinyl-5'-AMP. Histidine 258 contacts Zn(2+). Residue valine 285 coordinates L-cysteinyl-5'-AMP. Positions lysine 291–serine 295 match the 'KMSKS' region motif.

Belongs to the class-I aminoacyl-tRNA synthetase family. MshC subfamily. Monomer. The cofactor is Zn(2+).

The catalysed reaction is 1D-myo-inositol 2-amino-2-deoxy-alpha-D-glucopyranoside + L-cysteine + ATP = 1D-myo-inositol 2-(L-cysteinylamino)-2-deoxy-alpha-D-glucopyranoside + AMP + diphosphate + H(+). Its function is as follows. Catalyzes the ATP-dependent condensation of GlcN-Ins and L-cysteine to form L-Cys-GlcN-Ins. The chain is L-cysteine:1D-myo-inositol 2-amino-2-deoxy-alpha-D-glucopyranoside ligase from Cellulomonas flavigena (strain ATCC 482 / DSM 20109 / BCRC 11376 / JCM 18109 / NBRC 3775 / NCIMB 8073 / NRS 134).